The chain runs to 498 residues: Excisase C (498 aa).

Residues 263-446 (KIIYSFDLFE…FGIENRKKAF (184 aa)) enclose the Tyr recombinase domain. Active-site residues include R306, K336, R401, and H424. The O-(3'-phospho-DNA)-tyrosine intermediate role is filled by Y433.

It belongs to the XisA/XisC recombinase family.

In terms of biological role, essential for DNA excision. Site specific recombinase necessary for the excision of the 10.5 kb hupL element during heterocyst differentiation. The polypeptide is Excisase C (xisC) (Nostoc sp. (strain PCC 7120 / SAG 25.82 / UTEX 2576)).